A 1522-amino-acid polypeptide reads, in one-letter code: Histone-lysine N-methyltransferase EZH2 (1522 aa).

Residues 1–196 (MSPARGDANA…PKTPTPKNTE (196 aa)) form a disordered region. Over residues 39-61 (NRENLRDRDRADKLEKLEKDAHA) the composition is skewed to basic and acidic residues. Composition is skewed to low complexity over residues 64 to 76 (QTQT…PVTV) and 103 to 130 (RGST…SPSL). Residues 141-162 (ILASRTSRFSNRTGIRDSQSPS) are compositionally biased toward polar residues. The segment covering 180–195 (ATSNTPAPKTPTPKNT) has biased composition (low complexity). The segment at 190 to 220 (PTPKNTEWTVDKIASALSVLAEEVPQNHSRL) is SBD domain. Residues 221–250 (VNFLLEETEKRAPQPRHLSKTDPFAHMKSK) form an EBD domain region. The interval 251–300 (AIDANRPRPEGVPTMDVKFKQHSGEYGKSRNSGRRFQYPVVCIKPDREPV) is BAM domain. The segment at 301 to 320 (PPYRFHHAEIRKNILALNSQ) is SAL domain. An SRM domain region spans residues 321 to 360 (LNFVPHLRDVDPNSAEEQKYSAWLMDLENLDSKSGFKIQP). Residues 361–480 (RSQKIAKRAQ…PIFDNKRAKD (120 aa)) are SANT1L domain. The disordered stretch occupies residues 406 to 426 (PESDDSMTPQQKSNLLDTYSD). Over residues 411-422 (SMTPQQKSNLLD) the composition is skewed to polar residues. Residues 481–560 (APGSQKPPDE…EQRQKTEGGS (80 aa)) are MCSS domain. Positions 508, 511, 516, 518, 570, 574, 615, 625, 685, 687, 691, 697, 699, 709, 713, 715, 720, 727, 729, 736, 746, 748, 755, 760, 763, and 784 each coordinate Zn(2+). Residues 561 to 650 (ANAPPAHPPC…PVEPRTIPKQ (90 aa)) form an SANT2L domain region. In terms of domain architecture, CXC spans 658 to 780 (RRKKQLMSDW…PENAYDEVLH (123 aa)). The 125-residue stretch at 795–919 (KAVVLGKSQL…AGEELFFNYG (125 aa)) folds into the SET domain. Tyr-809, Lys-852, Ser-854, and Tyr-855 together coordinate S-adenosyl-L-homocysteine. S-adenosyl-L-methionine is bound by residues Tyr-809, Lys-852, Ser-854, Tyr-855, Asn-880, His-881, and Thr-926. His-881 provides a ligand contact to S-adenosyl-L-homocysteine. An S-adenosyl-L-homocysteine-binding site is contributed by Lys-927. Residues 933–1522 (NEQSGAETTP…KPARYRDEGE (590 aa)) are disordered. Over residues 935-946 (QSGAETTPQQPK) the composition is skewed to polar residues. Positions 971–988 (GFDDDDRDGNDSDPDDLW) are enriched in acidic residues. Positions 992–1024 (QQQQQQQQQQQQQQQQQQQQQQQQQQQQQQQQQ) are enriched in low complexity. Residues 1025–1038 (AQKPQPSTSHQPQS) show a composition bias toward polar residues. A compositionally biased stretch (basic and acidic residues) spans 1053–1066 (SPDKQLRRENHDAQ). The span at 1072–1091 (QFQQQEQQQQQQQQQQQQQQ) shows a compositional bias: low complexity. The segment covering 1127 to 1136 (DSSSGGSANE) has biased composition (polar residues). The segment covering 1142-1162 (KPSRRGGARPGAGRKPKHRPP) has biased composition (basic residues). 2 stretches are compositionally biased toward basic and acidic residues: residues 1207–1221 (SDSK…TDKE) and 1228–1238 (VNEKDREKGRD). A compositionally biased stretch (low complexity) spans 1255-1299 (KSAPSPAKKQASSPTKISDSNRTTSKNTSSNNNNNTNNNNNNNNN). The segment covering 1316–1330 (HLTNSQPAALSPSAT) has biased composition (polar residues). Low complexity-rich tracts occupy residues 1355–1385 (STMT…SSSS) and 1415–1428 (SSSL…SVFS). The segment covering 1455 to 1464 (SGLNSTSLSQ) has biased composition (polar residues). The span at 1465–1494 (ERGEKHEKHEKEKPKEKKGEKERERERDRS) shows a compositional bias: basic and acidic residues.

This sequence belongs to the class V-like SAM-binding methyltransferase superfamily. Histone-lysine methyltransferase family. EZ subfamily. In terms of assembly, component of the polycomb repressive complex 2 (PRC2) that consists of four core subunits icluding EZH2, EED, SUZ12, and RBBP4, among which EZH2 is the catalytic subunit and which minimally requires EED and SUZ12 for catalysis.

Its subcellular location is the nucleus. It carries out the reaction L-lysyl(27)-[histone H3] + 3 S-adenosyl-L-methionine = N(6),N(6),N(6)-trimethyl-L-lysyl(27)-[histone H3] + 3 S-adenosyl-L-homocysteine + 3 H(+). With respect to regulation, the end product of PRC2 catalysis, H3K27me3, interacts with EED to stimulate the enzymatic activity of PRC2 allosterically. The enzymatic activity of PRC2 is regulated in a very complex manner and PCR2 can adopt different stages including the autoinhibited (A); SAM-bound autoinhibited (A'), basal (B), and H3K27me3-stimulated (S) stages. Actictivity is inhibited by pyridone inhibitors such as GSK126. Catalytic subunit of the of the Polycomb Repressive Complex 2 (PRC2), a histone H3 lysine methyltransferase responsible for generating mono-, di-, and tri-methylation on Lys27 (H3K27me1, H3K27me2 and H3K27me3). The tri-methylated form is known to be critical in gene repression, and its proper placement is essential in defining repression patterns during development. The PRC2 complex interacts with thousands of RNA species in vivo, but the physiological function of RNA binding has still to be determined. This is Histone-lysine N-methyltransferase EZH2 from Chaetomium thermophilum (strain DSM 1495 / CBS 144.50 / IMI 039719) (Thermochaetoides thermophila).